Reading from the N-terminus, the 147-residue chain is Hemoglobin subunit beta (147 aa).

Valine 2 carries the post-translational modification N-acetylvaline. In terms of domain architecture, Globin spans 3–147; it reads HMSAEEKGIV…VAAALAHKYH (145 aa). Residue threonine 13 is modified to Phosphothreonine. A Phosphoserine modification is found at serine 45. N6-acetyllysine is present on lysine 60. A heme b-binding site is contributed by histidine 64. Lysine 83 carries the N6-acetyllysine modification. Histidine 93 lines the heme b pocket. At cysteine 94 the chain carries S-nitrosocysteine. Lysine 145 is subject to N6-acetyllysine.

This sequence belongs to the globin family. Heterotetramer of two alpha chains and two beta chains. Red blood cells.

Its function is as follows. Involved in oxygen transport from the lung to the various peripheral tissues. The polypeptide is Hemoglobin subunit beta (HBB) (Scalopus aquaticus (Eastern mole)).